A 306-amino-acid chain; its full sequence is tRNA dimethylallyltransferase (306 aa).

Position 9-16 (9-16 (GPTAIGKT)) interacts with ATP. 11 to 16 (TAIGKT) serves as a coordination point for substrate. The tract at residues 34–37 (DSMQ) is interaction with substrate tRNA.

This sequence belongs to the IPP transferase family. Monomer. Requires Mg(2+) as cofactor.

It carries out the reaction adenosine(37) in tRNA + dimethylallyl diphosphate = N(6)-dimethylallyladenosine(37) in tRNA + diphosphate. Catalyzes the transfer of a dimethylallyl group onto the adenine at position 37 in tRNAs that read codons beginning with uridine, leading to the formation of N6-(dimethylallyl)adenosine (i(6)A). The polypeptide is tRNA dimethylallyltransferase (Lactobacillus acidophilus (strain ATCC 700396 / NCK56 / N2 / NCFM)).